The sequence spans 289 residues: Acetyl-coenzyme A carboxylase carboxyl transferase subunit beta (289 aa).

The 266-residue stretch at 24-289 (LWIKCPESGE…NSPRRAPIPA (266 aa)) folds into the CoA carboxyltransferase N-terminal domain.

The protein belongs to the AccD/PCCB family. As to quaternary structure, acetyl-CoA carboxylase is a heterohexamer composed of biotin carboxyl carrier protein (AccB), biotin carboxylase (AccC) and two subunits each of ACCase subunit alpha (AccA) and ACCase subunit beta (AccD).

Its subcellular location is the cytoplasm. The enzyme catalyses N(6)-carboxybiotinyl-L-lysyl-[protein] + acetyl-CoA = N(6)-biotinyl-L-lysyl-[protein] + malonyl-CoA. It functions in the pathway lipid metabolism; malonyl-CoA biosynthesis; malonyl-CoA from acetyl-CoA: step 1/1. Component of the acetyl coenzyme A carboxylase (ACC) complex. Biotin carboxylase (BC) catalyzes the carboxylation of biotin on its carrier protein (BCCP) and then the CO(2) group is transferred by the transcarboxylase to acetyl-CoA to form malonyl-CoA. This Beijerinckia indica subsp. indica (strain ATCC 9039 / DSM 1715 / NCIMB 8712) protein is Acetyl-coenzyme A carboxylase carboxyl transferase subunit beta.